Consider the following 227-residue polypeptide: Putative N-acetylmannosamine-6-phosphate 2-epimerase (227 aa).

This sequence belongs to the NanE family.

The catalysed reaction is an N-acyl-D-glucosamine 6-phosphate = an N-acyl-D-mannosamine 6-phosphate. Its pathway is amino-sugar metabolism; N-acetylneuraminate degradation; D-fructose 6-phosphate from N-acetylneuraminate: step 3/5. Converts N-acetylmannosamine-6-phosphate (ManNAc-6-P) to N-acetylglucosamine-6-phosphate (GlcNAc-6-P). In Shouchella clausii (strain KSM-K16) (Alkalihalobacillus clausii), this protein is Putative N-acetylmannosamine-6-phosphate 2-epimerase.